A 444-amino-acid chain; its full sequence is MFNNTIRKTHAIRTAAACVAFALMSAGAQAATDIPFWHSMEGELGKEVNSLADRFNKEHTDVKIVPVYKGNYEQNLAAGIAAYRAGNAPAILQVYEVGTATMMASKAIKPVYEVFKDAGINFDESVFVPTVSGYYTDAKSGHLLSQPFNSSTPVLYYNKDAFKKAGLDPEQPPKTWQQMADYTAKLRSAGMKCGYASGWQGWIQIENFSAWNGLPVATKNNGFDGTDTVLEFNKPTQVKHIQLLQDMNKKGDFTYFGRKDEPTEKFYNGECAMTTASSGSLANIREHAKFNYGVGMMPYDADAKGAPQNAIIGGASLWVMGGKDAATYKGVAEFMQFLAKPENAAEWHQKTGYLPITTAAYELTQKQGFYEKNPGADIATRQMLNKPPLPFTKGMRLGNMPQIRTVVDEELESVWTGKKTPQQALDSAVERGNALLRRFEQSTK.

Positions 1–30 (MFNNTIRKTHAIRTAAACVAFALMSAGAQA) are cleaved as a signal peptide. Residues Y72, E96, S151, S277, G314, Y353, and R404 each coordinate sn-glycerol 3-phosphate.

The protein belongs to the bacterial solute-binding protein 1 family. The complex is composed of two ATP-binding proteins (UgpC), two transmembrane proteins (UgpA and UgpE) and a solute-binding protein (UgpB).

It localises to the periplasm. Its function is as follows. Part of the ABC transporter complex UgpBAEC involved in sn-glycerol-3-phosphate (G3P) import. Binds G3P. The protein is sn-glycerol-3-phosphate-binding periplasmic protein UgpB (ugpB) of Pectobacterium atrosepticum (strain SCRI 1043 / ATCC BAA-672) (Erwinia carotovora subsp. atroseptica).